A 953-amino-acid chain; its full sequence is Vacuolar membrane protease (953 aa).

Topologically, residues 1 to 16 (MDQTKPPRRNPLAFTP) are cytoplasmic. A helical membrane pass occupies residues 17–37 (WPVTLITAVVYLAFVIPLLVI). Residues 38-382 (HHVVPSAPTS…TFVLFRLHTL (345 aa)) are Vacuolar-facing. Residues N53 and N115 are each glycosylated (N-linked (GlcNAc...) asparagine). 2 residues coordinate Zn(2+): H165 and D177. E211 acts as the Proton acceptor in catalysis. Residues E212, E237, and H310 each contribute to the Zn(2+) site. The helical transmembrane segment at 383-403 (FALSVTLLVVAPIVLLLTSII) threads the bilayer. Residues 404–437 (LTKVDKMYLFRTSIRPEGSLEVLPLYGDRGVIRY) are Cytoplasmic-facing. Residues 438 to 458 (PFLLGIPTAVTIGLAYLLTKF) traverse the membrane as a helical segment. Residues 459–464 (NPYIVH) lie on the Vacuolar side of the membrane. Residues 465–485 (SSQYAVWSMMVSVWIFLAWFV) form a helical membrane-spanning segment. At 486-499 (SRVADFARPSAFHR) the chain is on the cytoplasmic side. Residues 500–520 (VYTLTWTFVVMWVLQVIATVY) form a helical membrane-spanning segment. Topologically, residues 521–524 (QDRW) are vacuolar. A helical membrane pass occupies residues 525-545 (ALGGSYFIFFAYAGTFLATWI). Residues 546 to 650 (SYLELFALPR…SLPKWLWLLQ (105 aa)) are Cytoplasmic-facing. The interval 570–599 (ASSHSSRRGLSEEDEEDEDEAPTESTSLLG) is disordered. The segment covering 581–591 (EEDEEDEDEAP) has biased composition (acidic residues). Residues 651–671 (FLLAAPIVLILVGPIALLLTG) form a helical membrane-spanning segment. Residues 672 to 684 (SLHQTGQDGSSSL) are Vacuolar-facing. Residues 685–705 (FIYIAIVALTTLLLSPMLPFV) form a helical membrane-spanning segment. Over 706–711 (HRCTYH) the chain is Cytoplasmic. A helical membrane pass occupies residues 712 to 732 (IPLFMLAVFAGTLIYNLVAFP). The Vacuolar portion of the chain corresponds to 733–953 (FSDSNRLKLF…VEGRKSFEIA (221 aa)). An N-linked (GlcNAc...) asparagine glycan is attached at N779.

This sequence belongs to the peptidase M28 family. Requires Zn(2+) as cofactor.

It is found in the vacuole membrane. In terms of biological role, may be involved in vacuolar sorting and osmoregulation. The polypeptide is Vacuolar membrane protease (Emericella nidulans (strain FGSC A4 / ATCC 38163 / CBS 112.46 / NRRL 194 / M139) (Aspergillus nidulans)).